The chain runs to 209 residues: Imidazole glycerol phosphate synthase subunit HisH (209 aa).

The region spanning 3 to 209 (KIAIIDYGMG…SILKNFGEMK (207 aa)) is the Glutamine amidotransferase type-1 domain. Cysteine 81 functions as the Nucleophile in the catalytic mechanism. Active-site residues include histidine 190 and glutamate 192.

As to quaternary structure, heterodimer of HisH and HisF.

It localises to the cytoplasm. It carries out the reaction 5-[(5-phospho-1-deoxy-D-ribulos-1-ylimino)methylamino]-1-(5-phospho-beta-D-ribosyl)imidazole-4-carboxamide + L-glutamine = D-erythro-1-(imidazol-4-yl)glycerol 3-phosphate + 5-amino-1-(5-phospho-beta-D-ribosyl)imidazole-4-carboxamide + L-glutamate + H(+). The catalysed reaction is L-glutamine + H2O = L-glutamate + NH4(+). It functions in the pathway amino-acid biosynthesis; L-histidine biosynthesis; L-histidine from 5-phospho-alpha-D-ribose 1-diphosphate: step 5/9. Functionally, IGPS catalyzes the conversion of PRFAR and glutamine to IGP, AICAR and glutamate. The HisH subunit catalyzes the hydrolysis of glutamine to glutamate and ammonia as part of the synthesis of IGP and AICAR. The resulting ammonia molecule is channeled to the active site of HisF. This Geobacter sulfurreducens (strain ATCC 51573 / DSM 12127 / PCA) protein is Imidazole glycerol phosphate synthase subunit HisH.